We begin with the raw amino-acid sequence, 117 residues long: Large ribosomal subunit protein uL18 (117 aa).

It belongs to the universal ribosomal protein uL18 family. Part of the 50S ribosomal subunit; part of the 5S rRNA/L5/L18/L25 subcomplex. Contacts the 5S and 23S rRNAs.

Functionally, this is one of the proteins that bind and probably mediate the attachment of the 5S RNA into the large ribosomal subunit, where it forms part of the central protuberance. This is Large ribosomal subunit protein uL18 from Idiomarina loihiensis (strain ATCC BAA-735 / DSM 15497 / L2-TR).